Here is a 757-residue protein sequence, read N- to C-terminus: Polyribonucleotide nucleotidyltransferase (757 aa).

Mg(2+) is bound by residues D482 and D488. Positions 549–608 (PRMLSFYIDKDKISAAIGSKGKNIRSVCERSNAKIEIGDDGKVSVFATSGTEAEIAKSMM) constitute a KH domain. The S1 motif domain maps to 618–686 (GSIVDVKVVR…KGGCPKLSRR (69 aa)). Residues 703-714 (EERKDGPNDRDN) show a composition bias toward basic and acidic residues. The tract at residues 703-757 (EERKDGPNDRDNYYNNSFSRKPGGSHHKRPPRPRSGFSNRNRPKFGNNDSSSGFY) is disordered. Positions 725-734 (GGSHHKRPPR) are enriched in basic residues.

The protein belongs to the polyribonucleotide nucleotidyltransferase family. The cofactor is Mg(2+).

It localises to the cytoplasm. The enzyme catalyses RNA(n+1) + phosphate = RNA(n) + a ribonucleoside 5'-diphosphate. Involved in mRNA degradation. Catalyzes the phosphorolysis of single-stranded polyribonucleotides processively in the 3'- to 5'-direction. The protein is Polyribonucleotide nucleotidyltransferase of Wolbachia sp. subsp. Drosophila simulans (strain wRi).